The primary structure comprises 189 residues: Peptidyl-tRNA hydrolase (189 aa).

A tRNA-binding site is contributed by Tyr15. His20 (proton acceptor) is an active-site residue. Residues Phe66, Asn68, and Asn114 each coordinate tRNA.

The protein belongs to the PTH family. Monomer.

Its subcellular location is the cytoplasm. The catalysed reaction is an N-acyl-L-alpha-aminoacyl-tRNA + H2O = an N-acyl-L-amino acid + a tRNA + H(+). Its function is as follows. Hydrolyzes ribosome-free peptidyl-tRNAs (with 1 or more amino acids incorporated), which drop off the ribosome during protein synthesis, or as a result of ribosome stalling. Catalyzes the release of premature peptidyl moieties from peptidyl-tRNA molecules trapped in stalled 50S ribosomal subunits, and thus maintains levels of free tRNAs and 50S ribosomes. This chain is Peptidyl-tRNA hydrolase, found in Acidithiobacillus ferrooxidans (strain ATCC 23270 / DSM 14882 / CIP 104768 / NCIMB 8455) (Ferrobacillus ferrooxidans (strain ATCC 23270)).